We begin with the raw amino-acid sequence, 66 residues long: Large ribosomal subunit protein bL35 (66 aa).

A compositionally biased stretch (basic residues) spans 1-16; it reads MPKMKTHRGAAKRVKR. The disordered stretch occupies residues 1–28; sequence MPKMKTHRGAAKRVKRTGSGQLKRSRAF.

This sequence belongs to the bacterial ribosomal protein bL35 family.

The protein is Large ribosomal subunit protein bL35 of Staphylococcus epidermidis (strain ATCC 35984 / DSM 28319 / BCRC 17069 / CCUG 31568 / BM 3577 / RP62A).